The chain runs to 565 residues: MEPKTKKQRSLYIPYAGPVLLEFPLLNKGSAFSMEERRNFNLLGLLPEVVETIEEQAERAWIQYQGFKTEIDKHIYLRNIQDTNETLFYRLVNNHLDEMMPVIYTPTVGAACERFSEIYRRSRGVFISYQNRHNMDDILQNVPNHNIKVIVVTDGERILGLGDQGIGGMGIPIGKLSLYTACGGISPAYTLPVVLDVGTNNQQLLNDPLYMGWRNPRIIDDEYYEFVDEFIQAVKQRWPDVLLQFEDFAQKNAMPLLNRYRNEICSFNDDIQGTAAVTVGTLIAASRAAGGQLSEKKIVFLGAGSAGCGIAEMIIAQTQREGLSEEAARQKVFMVDRFGLLTDKMPNLLPFQTKLVQKRENLSDWDTDSDVLSLLDVVRNVKPDILIGVSGQTGLFTEEIIREMHKHCPRPIVMPLSNPTSRVEATPQDIIAWTEGNALVATGSPFNPVVWKDKIYPIAQCNNAFIFPGIGLGVIASGASRITDEMLMSASETLAQYSPLVLNGEGLVLPELKDIQKVSRAIAFAVGKMAQQQGVAVKTSAEALQQAIDDNFWQAEYRDYRRTSI.

The active-site Proton donor is the Tyr104. Position 157 (Arg157) interacts with NAD(+). Residue Lys175 is the Proton acceptor of the active site. A divalent metal cation is bound by residues Glu246, Asp247, and Asp270. The NAD(+) site is built by Asp270 and Asn418.

The protein belongs to the malic enzymes family. As to quaternary structure, homotetramer. It depends on Mg(2+) as a cofactor. Mn(2+) serves as cofactor.

The enzyme catalyses (S)-malate + NAD(+) = pyruvate + CO2 + NADH. The catalysed reaction is oxaloacetate + H(+) = pyruvate + CO2. The sequence is that of NAD-dependent malic enzyme from Shigella boydii serotype 18 (strain CDC 3083-94 / BS512).